The following is a 1082-amino-acid chain: Protein argonaute 1A (1082 aa).

Disordered stretches follow at residues 17 to 148 and 187 to 208; these read MMRK…ASQD and GQSPTSQAIQPAPPSSKSVRFP. Residues 29–38 show a composition bias toward polar residues; sequence GESSGTQQAT. Positions 72–100 are enriched in gly residues; it reads GRGGGQHQGRGGRYQGRGGPTSHQPGGGP. The PAZ domain occupies 420 to 533; the sequence is PVIDFVAQLL…LPMEVCKIVE (114 aa). The Piwi domain maps to 709–1030; it reads LLIAILPDNN…AAFRARFYME (322 aa). The disordered stretch occupies residues 1036 to 1065; the sequence is SGSMASGAHTRGGGPLPGARSTKPAGNVAV.

This sequence belongs to the argonaute family. Ago subfamily.

Probably involved in the RNA silencing pathway. May bind to short RNAs such as microRNAs (miRNAs) or short interfering RNAs (siRNAs), and represses the translation of mRNAs which are complementary to them. This Oryza sativa subsp. japonica (Rice) protein is Protein argonaute 1A (AGO1A).